We begin with the raw amino-acid sequence, 146 residues long: Interleukin-3 (146 aa).

The signal sequence occupies residues 1-17 (MSSLSILHLLLLLLSLH). Asparagine 65 carries an N-linked (GlcNAc...) asparagine glycan.

Belongs to the IL-3 family. As to quaternary structure, monomer. In terms of tissue distribution, activated T-cells, mast cells, natural killer cells.

Its subcellular location is the secreted. Its function is as follows. Granulocyte/macrophage colony-stimulating factors are cytokines that act in hematopoiesis by controlling the production, differentiation, and function of 2 related white cell populations of the blood, the granulocytes and the monocytes-macrophages. Functionally, this CSF induces granulocytes, macrophages, mast cells, stem cells, erythroid cells, eosinophils and megakaryocytes. This Ovis aries (Sheep) protein is Interleukin-3 (IL3).